Consider the following 314-residue polypeptide: Methionyl-tRNA formyltransferase (314 aa).

112–115 provides a ligand contact to (6S)-5,6,7,8-tetrahydrofolate; it reads SLLP.

The protein belongs to the Fmt family.

It catalyses the reaction L-methionyl-tRNA(fMet) + (6R)-10-formyltetrahydrofolate = N-formyl-L-methionyl-tRNA(fMet) + (6S)-5,6,7,8-tetrahydrofolate + H(+). Functionally, attaches a formyl group to the free amino group of methionyl-tRNA(fMet). The formyl group appears to play a dual role in the initiator identity of N-formylmethionyl-tRNA by promoting its recognition by IF2 and preventing the misappropriation of this tRNA by the elongation apparatus. The chain is Methionyl-tRNA formyltransferase from Legionella pneumophila subsp. pneumophila (strain Philadelphia 1 / ATCC 33152 / DSM 7513).